Consider the following 176-residue polypeptide: Peptide methionine sulfoxide reductase B3 (176 aa).

The first 26 residues, 1–26 (MNIVNSKILFLSFTLLLLLQSSIVES), serve as a signal peptide directing secretion. Residues 51-172 (DEEWRAILSP…NSVSLKFTPA (122 aa)) form the MsrB domain. 4 residues coordinate Zn(2+): C90, C93, C136, and C139. A disulfide bridge links C108 with C161. The active-site Nucleophile is the C161.

It belongs to the MsrB Met sulfoxide reductase family. Zn(2+) serves as cofactor.

It localises to the endoplasmic reticulum. The catalysed reaction is L-methionyl-[protein] + [thioredoxin]-disulfide + H2O = L-methionyl-(R)-S-oxide-[protein] + [thioredoxin]-dithiol. Catalyzes the reduction of methionine sulfoxide (MetSO) to methionine in proteins. Plays a protective role against oxidative stress by restoring activity to proteins that have been inactivated by methionine oxidation. Involved in cold tolerance. Eliminates MetSO and reactive oxygen species that accumulate at the ER during cold acclimation. MSRB family specifically reduces the MetSO R-enantiomer. This Arabidopsis thaliana (Mouse-ear cress) protein is Peptide methionine sulfoxide reductase B3 (MSRB3).